The following is a 615-amino-acid chain: Protein DlpA (615 aa).

It belongs to the isocitrate and isopropylmalate dehydrogenases family. The protein to M.jannaschii MJ0644 in the C-terminal section.

In Legionella pneumophila subsp. pneumophila (strain Philadelphia 1 / ATCC 33152 / DSM 7513), this protein is Protein DlpA (dlpA).